The sequence spans 645 residues: Chaperone protein DnaK (645 aa).

Thr-200 carries the post-translational modification Phosphothreonine; by autocatalysis. The interval 603–645 (AYSAQKDSGTSTDSTASDTSGNPEERVVDSEYQEIKKDDEDKK) is disordered. Low complexity predominate over residues 609–623 (DSGTSTDSTASDTSG). Residues 625–645 (PEERVVDSEYQEIKKDDEDKK) show a composition bias toward basic and acidic residues.

It belongs to the heat shock protein 70 family.

Functionally, acts as a chaperone. The protein is Chaperone protein DnaK of Anaplasma marginale (strain St. Maries).